Consider the following 244-residue polypeptide: Probable phosphatase CA_C0509 (244 aa).

Zn(2+) contacts are provided by His8, His10, His16, His41, Glu74, His102, His132, Asp193, and His195.

Belongs to the PHP family. Zn(2+) serves as cofactor.

The polypeptide is Probable phosphatase CA_C0509 (Clostridium acetobutylicum (strain ATCC 824 / DSM 792 / JCM 1419 / IAM 19013 / LMG 5710 / NBRC 13948 / NRRL B-527 / VKM B-1787 / 2291 / W)).